A 258-amino-acid chain; its full sequence is Regulatory protein RecX (258 aa).

Belongs to the RecX family.

It localises to the cytoplasm. Modulates RecA activity. This Streptococcus pneumoniae (strain 70585) protein is Regulatory protein RecX.